We begin with the raw amino-acid sequence, 182 residues long: Prorelaxin (182 aa).

An N-terminal signal peptide occupies residues 1–25 (MRRLFLSHVLGAWLLLSQLPRELSG). A Pyrrolidone carboxylic acid modification is found at Q26. 3 disulfides stabilise this stretch: C35/C169, C47/C182, and C168/C173. A propeptide spans 54–156 (KTVLRLEEPG…LKNLGLDKHS (103 aa)) (connecting peptide). Positions 161–162 (MI) are excised as a propeptide. At Q163 the chain carries Pyrrolidone carboxylic acid.

This sequence belongs to the insulin family. In terms of assembly, heterodimer of a B chain and an A chain linked by two disulfide bonds.

It localises to the secreted. Its function is as follows. Relaxin is an ovarian hormone that acts with estrogen to produce dilatation of the birth canal in many mammals. The sequence is that of Prorelaxin (RLN) from Equus caballus (Horse).